Consider the following 441-residue polypeptide: Serine/threonine-protein phosphatase 2A activator 1 (441 aa).

Polar residues-rich tracts occupy residues 66–75 (NIPPSNTTHS) and 421–432 (QRQDDLNSTTYR). Disordered regions lie at residues 66-100 (NIPP…SSNQ) and 421-441 (QRQD…LGRN).

This sequence belongs to the PTPA-type PPIase family.

The protein resides in the cytoplasm. It is found in the nucleus. It carries out the reaction [protein]-peptidylproline (omega=180) = [protein]-peptidylproline (omega=0). Functionally, PPIases accelerate the folding of proteins. It catalyzes the cis-trans isomerization of proline imidic peptide bonds in oligopeptides. Acts as a regulatory subunit for PP2A-like phosphatases modulating their activity or substrate specificity, probably by inducing a conformational change in the catalytic subunit, a direct target of the PPIase. Can reactivate inactive phosphatase PP2A-phosphatase methylesterase complexes (PP2Ai) in presence of ATP and Mg(2+) by dissociating the inactive form from the complex. This chain is Serine/threonine-protein phosphatase 2A activator 1 (RRD1), found in Debaryomyces hansenii (strain ATCC 36239 / CBS 767 / BCRC 21394 / JCM 1990 / NBRC 0083 / IGC 2968) (Yeast).